Here is a 640-residue protein sequence, read N- to C-terminus: ESX-3 secretion system protein EccA3 (640 aa).

Position 393–400 (393–400 (GPPGTGKT)) interacts with ATP.

Belongs to the CbxX/CfxQ family. Part of the ESX-3 / type VII secretion system (T7SS), which is composed of cytosolic and membrane components.

It localises to the cytoplasm. In terms of biological role, part of an ESX-3 / type VII specialized secretion system (T7SS), which exports several proteins. EccA3 exhibits ATPase activity and may provide energy for the export of ESX-3 substrates. This is ESX-3 secretion system protein EccA3 from Mycobacterium leprae (strain TN).